The following is a 194-amino-acid chain: Translation machinery-associated protein 22 (194 aa).

Residues 102–173 (VQIKRVERNK…DVQDWLLEVY (72 aa)) form the SUI1 domain.

The protein belongs to the DENR family. Interacts with the 40S ribosomal subunit.

It localises to the cytoplasm. The chain is Translation machinery-associated protein 22 (tma22) from Aspergillus oryzae (strain ATCC 42149 / RIB 40) (Yellow koji mold).